A 497-amino-acid chain; its full sequence is Probable D-lactate dehydrogenase, mitochondrial (497 aa).

An FAD-binding PCMH-type domain is found at 65-246 (HRCRPPDVVV…TKATLRLYGV (182 aa)).

Belongs to the FAD-binding oxidoreductase/transferase type 4 family. The cofactor is FAD.

The protein localises to the mitochondrion. The enzyme catalyses (R)-lactate + 2 Fe(III)-[cytochrome c] = 2 Fe(II)-[cytochrome c] + pyruvate + 2 H(+). Its function is as follows. Involved in D-lactate, but not L-lactate catabolic process. This Danio rerio (Zebrafish) protein is Probable D-lactate dehydrogenase, mitochondrial (ldhd).